We begin with the raw amino-acid sequence, 256 residues long: Small ribosomal subunit protein eS1 (256 aa).

N-acetylalanine; partial is present on Ala2.

The protein belongs to the eukaryotic ribosomal protein eS1 family. In terms of assembly, component of the small ribosomal subunit. Mature ribosomes consist of a small (40S) and a large (60S) subunit. The 40S subunit contains about 33 different proteins and 1 molecule of RNA (18S). The 60S subunit contains about 49 different proteins and 3 molecules of RNA (25S, 5.8S and 5S).

Its subcellular location is the cytoplasm. This Candida tropicalis (strain ATCC MYA-3404 / T1) (Yeast) protein is Small ribosomal subunit protein eS1.